The sequence spans 100 residues: Urease subunit gamma (100 aa).

It belongs to the urease gamma subunit family. Heterotrimer of UreA (gamma), UreB (beta) and UreC (alpha) subunits. Three heterotrimers associate to form the active enzyme.

The protein localises to the cytoplasm. It catalyses the reaction urea + 2 H2O + H(+) = hydrogencarbonate + 2 NH4(+). It participates in nitrogen metabolism; urea degradation; CO(2) and NH(3) from urea (urease route): step 1/1. Functionally, ureolysis may allow urea to be employed as a nitrogen source for growth and produces ammonia which may protect from killing at low pH. The sequence is that of Urease subunit gamma from Streptococcus salivarius (strain 57.I).